Here is a 114-residue protein sequence, read N- to C-terminus: Non-specific lipid-transfer protein 1 (114 aa).

Residues 1-23 form the signal peptide; the sequence is MEMVSKIACFVLLCMVVVAPHAE. Intrachain disulfides connect Cys-27–Cys-73, Cys-37–Cys-50, Cys-51–Cys-96, and Cys-71–Cys-110.

The protein belongs to the plant LTP family.

Functionally, plant non-specific lipid-transfer proteins transfer phospholipids as well as galactolipids across membranes. May play a role in wax or cutin deposition in the cell walls of expanding epidermal cells and certain secretory tissues. The chain is Non-specific lipid-transfer protein 1 (TSW12) from Solanum lycopersicum (Tomato).